A 310-amino-acid chain; its full sequence is Oxygen-dependent coproporphyrinogen-III oxidase (310 aa).

Residue Ser-97 coordinates substrate. Residues His-101 and His-111 each coordinate a divalent metal cation. Residue His-111 is the Proton donor of the active site. Residue 113 to 115 (NFR) participates in substrate binding. A divalent metal cation is bound by residues His-150 and His-180. An important for dimerization region spans residues 245–280 (YVEFNLLYDRGTRFGLEFGGRTESILMSLPPRVVWR). Position 263–265 (263–265 (GGR)) interacts with substrate.

The protein belongs to the aerobic coproporphyrinogen-III oxidase family. In terms of assembly, homodimer. A divalent metal cation is required as a cofactor.

It is found in the cytoplasm. It carries out the reaction coproporphyrinogen III + O2 + 2 H(+) = protoporphyrinogen IX + 2 CO2 + 2 H2O. Its pathway is porphyrin-containing compound metabolism; protoporphyrin-IX biosynthesis; protoporphyrinogen-IX from coproporphyrinogen-III (O2 route): step 1/1. Its function is as follows. Involved in the heme biosynthesis. Catalyzes the aerobic oxidative decarboxylation of propionate groups of rings A and B of coproporphyrinogen-III to yield the vinyl groups in protoporphyrinogen-IX. The protein is Oxygen-dependent coproporphyrinogen-III oxidase of Coxiella burnetii (strain Dugway 5J108-111).